A 294-amino-acid polypeptide reads, in one-letter code: 4-hydroxy-tetrahydrodipicolinate synthase (294 aa).

Threonine 44 is a pyruvate binding site. The active-site Proton donor/acceptor is the tyrosine 132. Residue lysine 161 is the Schiff-base intermediate with substrate of the active site. Residue isoleucine 206 coordinates pyruvate.

It belongs to the DapA family. As to quaternary structure, homotetramer; dimer of dimers.

The protein localises to the cytoplasm. It carries out the reaction L-aspartate 4-semialdehyde + pyruvate = (2S,4S)-4-hydroxy-2,3,4,5-tetrahydrodipicolinate + H2O + H(+). Its pathway is amino-acid biosynthesis; L-lysine biosynthesis via DAP pathway; (S)-tetrahydrodipicolinate from L-aspartate: step 3/4. In terms of biological role, catalyzes the condensation of (S)-aspartate-beta-semialdehyde [(S)-ASA] and pyruvate to 4-hydroxy-tetrahydrodipicolinate (HTPA). The protein is 4-hydroxy-tetrahydrodipicolinate synthase of Thermotoga petrophila (strain ATCC BAA-488 / DSM 13995 / JCM 10881 / RKU-1).